We begin with the raw amino-acid sequence, 528 residues long: GMP synthase [glutamine-hydrolyzing] (528 aa).

The Glutamine amidotransferase type-1 domain maps to 13–204; sequence SILILDFGSQ…VYSISKCKAD (192 aa). The Nucleophile role is filled by C90. Catalysis depends on residues H178 and E180. Positions 205-403 constitute a GMPS ATP-PPase domain; the sequence is WNTETFLEET…LGLPDEIIKR (199 aa). ATP is bound at residue 232–238; the sequence is SGGVDSS.

As to quaternary structure, homodimer.

It carries out the reaction XMP + L-glutamine + ATP + H2O = GMP + L-glutamate + AMP + diphosphate + 2 H(+). It functions in the pathway purine metabolism; GMP biosynthesis; GMP from XMP (L-Gln route): step 1/1. Its function is as follows. Catalyzes the synthesis of GMP from XMP. This Prochlorococcus marinus (strain MIT 9515) protein is GMP synthase [glutamine-hydrolyzing].